The primary structure comprises 442 residues: Amino-acid acetyltransferase (442 aa).

One can recognise an N-acetyltransferase domain in the interval 295-442 (EQARAATIED…RSKVLSKTIS (148 aa)).

This sequence belongs to the acetyltransferase family. ArgA subfamily.

Its subcellular location is the cytoplasm. The catalysed reaction is L-glutamate + acetyl-CoA = N-acetyl-L-glutamate + CoA + H(+). The protein operates within amino-acid biosynthesis; L-arginine biosynthesis; N(2)-acetyl-L-ornithine from L-glutamate: step 1/4. In Aeromonas salmonicida (strain A449), this protein is Amino-acid acetyltransferase.